The primary structure comprises 422 residues: Phagosome assembly factor 1 (422 aa).

Belongs to the PHAF1 family. In terms of assembly, interacts with BCAS3; the interaction is requrired for the association with the phagophore.

It localises to the cytoplasm. Its subcellular location is the preautophagosomal structure. Its function is as follows. Plays a regulatory role in autophagic activity. In complex with BCAS3, associates with the autophagosome formation site during both non-selective and selective autophagy. This chain is Phagosome assembly factor 1, found in Homo sapiens (Human).